Consider the following 517-residue polypeptide: Acetylcholine receptor subunit gamma (517 aa).

An N-terminal signal peptide occupies residues 1 to 22 (MHGGQGPLLLLLLLAVCLGAQG). Residues 23–240 (RNQEERLLAD…VVFYLLIQRK (218 aa)) lie on the Extracellular side of the membrane. N-linked (GlcNAc...) asparagine glycosylation is found at asparagine 52 and asparagine 163. Cysteine 150 and cysteine 164 are disulfide-bonded. 3 helical membrane passes run 241–265 (PLFY…IHFL), 275–293 (TVAI…LVAK), and 309–330 (LTFL…LNVS). Residues 331–474 (LRSPHTHSMA…WFLVGRVLDR (144 aa)) are Cytoplasmic-facing. Residues 475-495 (VCFLAMLSLFICGTAGIFLMA) traverse the membrane as a helical segment.

It belongs to the ligand-gated ion channel (TC 1.A.9) family. Acetylcholine receptor (TC 1.A.9.1) subfamily. Gamma/CHRNG sub-subfamily. As to quaternary structure, pentamer of two alpha chains, and one each of the beta, delta, and gamma (in immature muscle) or epsilon (in mature muscle) chains.

Its subcellular location is the postsynaptic cell membrane. The protein resides in the cell membrane. It carries out the reaction K(+)(in) = K(+)(out). The enzyme catalyses Na(+)(in) = Na(+)(out). In terms of biological role, after binding acetylcholine, the AChR responds by an extensive change in conformation that affects all subunits and leads to opening of an ion-conducting channel across the plasma membrane. This Homo sapiens (Human) protein is Acetylcholine receptor subunit gamma.